The chain runs to 245 residues: Haloacid dehalogenase-like hydrolase domain-containing protein At2g33255 (245 aa).

Residue T2 is modified to N-acetylalanine. The active-site Nucleophile is D39. Mg(2+)-binding residues include D39, D41, and D186. Residue D41 is the Proton donor of the active site.

It belongs to the HAD-like hydrolase superfamily. DOG/GPP family. Requires Mg(2+) as cofactor.

The sequence is that of Haloacid dehalogenase-like hydrolase domain-containing protein At2g33255 from Arabidopsis thaliana (Mouse-ear cress).